We begin with the raw amino-acid sequence, 146 residues long: Snaclec echicetin subunit beta (146 aa).

An N-terminal signal peptide occupies residues 1–23 (MGRFISVSFGLLVLLLSLSGTGA). 3 cysteine pairs are disulfide-bonded: Cys-25/Cys-36, Cys-53/Cys-142, and Cys-119/Cys-134. The C-type lectin domain maps to 32–143 (YEGYCYKVFK…CTWTFSFVCK (112 aa)).

It belongs to the snaclec family. As to quaternary structure, heterodimer of subunits alpha and beta; disulfide-linked. As to expression, expressed by the venom gland.

It is found in the secreted. Binding of echicetin to glycoprotein Ibalpha (GP1BA) receptor on platelets alone results in inhibition of platelet aggregation, while binding to both GPIba receptor and IgMk promotes platelet aggregation and signal transduction. This Echis carinatus (Saw-scaled viper) protein is Snaclec echicetin subunit beta.